Here is a 571-residue protein sequence, read N- to C-terminus: Streptolysin O (571 aa).

The N-terminal stretch at 1 to 33 (MSNKKTFKKYSRVAGLLTAALIIGNLVTANAES) is a signal peptide. The disordered stretch occupies residues 30–108 (NAESNKQNTA…KKSEEDHTEE (79 aa)). Positions 37 to 48 (NTASTETTTTNE) are enriched in low complexity. Composition is skewed to basic and acidic residues over residues 50–68 (PKPE…KTDD) and 79–108 (APKE…HTEE). The next 4 membrane-spanning stretches (beta stranded) occupy residues 260 to 273 (KSQI…NSKI), 280 to 289 (IDFKSISKGE), 358 to 367 (SNDVEAAFSA), and 375 to 387 (KTNG…LENS). The Conserved undecapeptide signature appears at 529–539 (ECTGLAWEWWR). A Cholesterol binding motif is present at residues 561 to 562 (TL).

It belongs to the cholesterol-dependent cytolysin family. In terms of assembly, homooligomeric pore complex of 35 to 50 subunits; when inserted in the host membrane.

It is found in the secreted. The protein localises to the host cell membrane. Functionally, a cholesterol-dependent toxin that causes cytolysis by forming pores in cholesterol containing host membranes. After binding to target membranes, the protein undergoes a major conformation change, leading to its insertion in the host membrane and formation of an oligomeric pore complex. Cholesterol is required for binding to host membranes, membrane insertion and pore formation; cholesterol binding is mediated by a Thr-Leu pair in the C-terminus. Can be reversibly inactivated by oxidation. This chain is Streptolysin O (slo), found in Streptococcus pyogenes serotype M18 (strain MGAS8232).